The chain runs to 937 residues: Protein translocase subunit SecA (937 aa).

Residues Q87, 105-109 (GEGKT), and D494 contribute to the ATP site. A disordered region spans residues 881-937 (RGLNYIGPDEGGRASVHSDAEEYGGGTPAAAGTRRERREAARAEGKGKRGPKSRRKH). Composition is skewed to basic and acidic residues over residues 890-900 (EGGRASVHSDA) and 913-927 (TRRE…EGKG). Residues 928–937 (KRGPKSRRKH) show a composition bias toward basic residues.

This sequence belongs to the SecA family. As to quaternary structure, monomer and homodimer. Part of the essential Sec protein translocation apparatus which comprises SecA, SecYEG and auxiliary proteins SecDF. Other proteins may also be involved.

The protein resides in the cell membrane. Its subcellular location is the cytoplasm. The enzyme catalyses ATP + H2O + cellular proteinSide 1 = ADP + phosphate + cellular proteinSide 2.. In terms of biological role, part of the Sec protein translocase complex. Interacts with the SecYEG preprotein conducting channel. Has a central role in coupling the hydrolysis of ATP to the transfer of proteins into and across the cell membrane, serving as an ATP-driven molecular motor driving the stepwise translocation of polypeptide chains across the membrane. The chain is Protein translocase subunit SecA from Nocardia farcinica (strain IFM 10152).